The sequence spans 273 residues: Putative pyruvate, phosphate dikinase regulatory protein (273 aa).

Position 153-160 (153-160 (GVSRTSKS)) interacts with ADP.

This sequence belongs to the pyruvate, phosphate/water dikinase regulatory protein family. PDRP subfamily.

It carries out the reaction N(tele)-phospho-L-histidyl/L-threonyl-[pyruvate, phosphate dikinase] + ADP = N(tele)-phospho-L-histidyl/O-phospho-L-threonyl-[pyruvate, phosphate dikinase] + AMP + H(+). It catalyses the reaction N(tele)-phospho-L-histidyl/O-phospho-L-threonyl-[pyruvate, phosphate dikinase] + phosphate + H(+) = N(tele)-phospho-L-histidyl/L-threonyl-[pyruvate, phosphate dikinase] + diphosphate. Functionally, bifunctional serine/threonine kinase and phosphorylase involved in the regulation of the pyruvate, phosphate dikinase (PPDK) by catalyzing its phosphorylation/dephosphorylation. This chain is Putative pyruvate, phosphate dikinase regulatory protein, found in Ehrlichia ruminantium (strain Welgevonden).